Consider the following 402-residue polypeptide: 4-hydroxy-3-methylbut-2-enyl diphosphate reductase (402 aa).

A [4Fe-4S] cluster-binding site is contributed by Cys-66. Position 96 (His-96) interacts with (2E)-4-hydroxy-3-methylbut-2-enyl diphosphate. His-96 contributes to the dimethylallyl diphosphate binding site. Isopentenyl diphosphate is bound at residue His-96. [4Fe-4S] cluster is bound at residue Cys-157. His-185 contributes to the (2E)-4-hydroxy-3-methylbut-2-enyl diphosphate binding site. A dimethylallyl diphosphate-binding site is contributed by His-185. His-185 contacts isopentenyl diphosphate. The active-site Proton donor is the Glu-187. Thr-250 contacts (2E)-4-hydroxy-3-methylbut-2-enyl diphosphate. Residue Cys-288 coordinates [4Fe-4S] cluster. Ser-317, Ser-318, Asn-319, and Ser-379 together coordinate (2E)-4-hydroxy-3-methylbut-2-enyl diphosphate. Dimethylallyl diphosphate-binding residues include Ser-317, Ser-318, Asn-319, and Ser-379. Ser-317, Ser-318, Asn-319, and Ser-379 together coordinate isopentenyl diphosphate.

It belongs to the IspH family. Requires [4Fe-4S] cluster as cofactor.

The enzyme catalyses isopentenyl diphosphate + 2 oxidized [2Fe-2S]-[ferredoxin] + H2O = (2E)-4-hydroxy-3-methylbut-2-enyl diphosphate + 2 reduced [2Fe-2S]-[ferredoxin] + 2 H(+). It catalyses the reaction dimethylallyl diphosphate + 2 oxidized [2Fe-2S]-[ferredoxin] + H2O = (2E)-4-hydroxy-3-methylbut-2-enyl diphosphate + 2 reduced [2Fe-2S]-[ferredoxin] + 2 H(+). It functions in the pathway isoprenoid biosynthesis; dimethylallyl diphosphate biosynthesis; dimethylallyl diphosphate from (2E)-4-hydroxy-3-methylbutenyl diphosphate: step 1/1. Its pathway is isoprenoid biosynthesis; isopentenyl diphosphate biosynthesis via DXP pathway; isopentenyl diphosphate from 1-deoxy-D-xylulose 5-phosphate: step 6/6. In terms of biological role, catalyzes the conversion of 1-hydroxy-2-methyl-2-(E)-butenyl 4-diphosphate (HMBPP) into a mixture of isopentenyl diphosphate (IPP) and dimethylallyl diphosphate (DMAPP). Acts in the terminal step of the DOXP/MEP pathway for isoprenoid precursor biosynthesis. The sequence is that of 4-hydroxy-3-methylbut-2-enyl diphosphate reductase from Crocosphaera subtropica (strain ATCC 51142 / BH68) (Cyanothece sp. (strain ATCC 51142)).